Reading from the N-terminus, the 48-residue chain is Large ribosomal subunit protein eL40 (48 aa).

Belongs to the eukaryotic ribosomal protein eL40 family.

This chain is Large ribosomal subunit protein eL40, found in Methanosphaera stadtmanae (strain ATCC 43021 / DSM 3091 / JCM 11832 / MCB-3).